We begin with the raw amino-acid sequence, 73 residues long: MKFLFLTLFVCCFIAVLVIPSEAQIDINVSCRYGSDCAEPCKRLKCLLPSKCINGKCTCYPSIKIKNCKVQTY.

Residues 1–23 (MKFLFLTLFVCCFIAVLVIPSEA) form the signal peptide.

It belongs to the short scorpion toxin superfamily. Potassium channel inhibitor family. Alpha-KTx 27 subfamily. Post-translationally, contains 4 disulfide bonds. In terms of tissue distribution, expressed by the venom gland.

The protein resides in the secreted. The sequence is that of Potassium channel toxin alpha-KTx 27.1 from Buthus israelis (Israeli scorpion).